The following is a 72-amino-acid chain: Disintegrin basilicin (72 aa).

One can recognise a Disintegrin domain in the interval 1–72 (AGEECDCGSP…ADCPRNHFHA (72 aa)). 6 disulfides stabilise this stretch: C5–C20, C7–C15, C14–C37, C28–C34, C33–C58, and C46–C65. The Cell attachment site motif lies at 50–52 (RGD).

It belongs to the venom metalloproteinase (M12B) family. P-II subfamily. P-IIa sub-subfamily. Monomer (disintegrin). In terms of tissue distribution, expressed by the venom gland.

The protein resides in the secreted. Its function is as follows. Inhibits fibrinogen interaction with platelets. Acts by binding to alpha-IIb/beta-3 (ITGA2B/ITGB3) on the platelet surface and inhibits aggregation induced by ADP, thrombin, platelet-activating factor and collagen. The chain is Disintegrin basilicin from Crotalus basiliscus (Mexican west-coast rattlesnake).